The chain runs to 259 residues: Phosphatidylserine decarboxylase proenzyme (259 aa).

The active-site Schiff-base intermediate with substrate; via pyruvic acid is Ser183. The residue at position 183 (Ser183) is a Pyruvic acid (Ser); by autocatalysis.

The protein belongs to the phosphatidylserine decarboxylase family. PSD-A subfamily. As to quaternary structure, heterodimer of a large membrane-associated beta subunit and a small pyruvoyl-containing alpha subunit. It depends on pyruvate as a cofactor. Post-translationally, is synthesized initially as an inactive proenzyme. Formation of the active enzyme involves a self-maturation process in which the active site pyruvoyl group is generated from an internal serine residue via an autocatalytic post-translational modification. Two non-identical subunits are generated from the proenzyme in this reaction, and the pyruvate is formed at the N-terminus of the alpha chain, which is derived from the carboxyl end of the proenzyme. The post-translation cleavage follows an unusual pathway, termed non-hydrolytic serinolysis, in which the side chain hydroxyl group of the serine supplies its oxygen atom to form the C-terminus of the beta chain, while the remainder of the serine residue undergoes an oxidative deamination to produce ammonia and the pyruvoyl prosthetic group on the alpha chain.

Its subcellular location is the cell membrane. It catalyses the reaction a 1,2-diacyl-sn-glycero-3-phospho-L-serine + H(+) = a 1,2-diacyl-sn-glycero-3-phosphoethanolamine + CO2. It participates in phospholipid metabolism; phosphatidylethanolamine biosynthesis; phosphatidylethanolamine from CDP-diacylglycerol: step 2/2. Catalyzes the formation of phosphatidylethanolamine (PtdEtn) from phosphatidylserine (PtdSer). The chain is Phosphatidylserine decarboxylase proenzyme from Neisseria gonorrhoeae (strain ATCC 700825 / FA 1090).